Reading from the N-terminus, the 512-residue chain is GMP synthase [glutamine-hydrolyzing] (512 aa).

The Glutamine amidotransferase type-1 domain maps to 7-197 (TIIVLDFGSQ…VFGVCGCSEG (191 aa)). The active-site Nucleophile is Cys-84. Catalysis depends on residues His-171 and Glu-173. The GMPS ATP-PPase domain occupies 198–387 (WNMENFIEVE…LGIPDEIVWR (190 aa)). Residue 225 to 231 (SGGVDSS) participates in ATP binding.

As to quaternary structure, homodimer.

It catalyses the reaction XMP + L-glutamine + ATP + H2O = GMP + L-glutamate + AMP + diphosphate + 2 H(+). Its pathway is purine metabolism; GMP biosynthesis; GMP from XMP (L-Gln route): step 1/1. Functionally, catalyzes the synthesis of GMP from XMP. This Bacillus anthracis protein is GMP synthase [glutamine-hydrolyzing].